A 159-amino-acid polypeptide reads, in one-letter code: Protein-export protein SecB (159 aa).

The protein belongs to the SecB family. In terms of assembly, homotetramer, a dimer of dimers. One homotetramer interacts with 1 SecA dimer.

Its subcellular location is the cytoplasm. In terms of biological role, one of the proteins required for the normal export of preproteins out of the cell cytoplasm. It is a molecular chaperone that binds to a subset of precursor proteins, maintaining them in a translocation-competent state. It also specifically binds to its receptor SecA. The chain is Protein-export protein SecB from Hahella chejuensis (strain KCTC 2396).